We begin with the raw amino-acid sequence, 508 residues long: Photosystem II CP47 reaction center protein (508 aa).

6 helical membrane-spanning segments follow: residues 21-36 (AVHLMHTALVSGWAGS), 101-115 (IVLSGLLFLAAIWHW), 140-156 (GIHLFLSGVLCFGFGAF), 203-218 (IAAGILGILAGLFHLS), 237-252 (VLSSSIAAVFFAAFVV), and 457-472 (CFALLFFFGHLWHGSR).

It belongs to the PsbB/PsbC family. PsbB subfamily. PSII is composed of 1 copy each of membrane proteins PsbA, PsbB, PsbC, PsbD, PsbE, PsbF, PsbH, PsbI, PsbJ, PsbK, PsbL, PsbM, PsbT, PsbX, PsbY, PsbZ, Psb30/Ycf12, at least 3 peripheral proteins of the oxygen-evolving complex and a large number of cofactors. It forms dimeric complexes. Binds multiple chlorophylls. PSII binds additional chlorophylls, carotenoids and specific lipids. serves as cofactor.

It localises to the plastid. Its subcellular location is the chloroplast thylakoid membrane. One of the components of the core complex of photosystem II (PSII). It binds chlorophyll and helps catalyze the primary light-induced photochemical processes of PSII. PSII is a light-driven water:plastoquinone oxidoreductase, using light energy to abstract electrons from H(2)O, generating O(2) and a proton gradient subsequently used for ATP formation. The protein is Photosystem II CP47 reaction center protein of Zygnema circumcarinatum (Green alga).